A 400-amino-acid chain; its full sequence is Tyrosine--tRNA ligase (400 aa).

The 'HIGH' region signature appears at 42–51; that stretch reads PTAPDLHLGH. The 'KMSKS' region signature appears at 226 to 230; sequence KMSKS. Lys229 provides a ligand contact to ATP. Positions 339-399 constitute an S4 RNA-binding domain; it reads FSISYILRRA…GKKKIAQIFV (61 aa).

This sequence belongs to the class-I aminoacyl-tRNA synthetase family. TyrS type 2 subfamily. As to quaternary structure, homodimer.

It is found in the cytoplasm. It carries out the reaction tRNA(Tyr) + L-tyrosine + ATP = L-tyrosyl-tRNA(Tyr) + AMP + diphosphate + H(+). Functionally, catalyzes the attachment of tyrosine to tRNA(Tyr) in a two-step reaction: tyrosine is first activated by ATP to form Tyr-AMP and then transferred to the acceptor end of tRNA(Tyr). The chain is Tyrosine--tRNA ligase from Hahella chejuensis (strain KCTC 2396).